Here is a 377-residue protein sequence, read N- to C-terminus: Endolytic peptidoglycan transglycosylase RlpA (377 aa).

Residues 1-19 form the signal peptide; that stretch reads MHKQLPVICVAAGIVLLAA. The N-palmitoyl cysteine moiety is linked to residue C20. C20 carries S-diacylglycerol cysteine lipidation. Residues 196-277 form a disordered region; the sequence is LPPRPDLSGG…PVSAPVTAPA (82 aa). 2 stretches are compositionally biased toward low complexity: residues 208–218 and 264–277; these read SASSAPAQPQG and PQTAPVSAPVTAPA. One can recognise an SPOR domain in the interval 300–376; the sequence is AAASGRFVVQ…AQLQSFIASA (77 aa).

Belongs to the RlpA family.

It localises to the cell membrane. Functionally, lytic transglycosylase with a strong preference for naked glycan strands that lack stem peptides. This is Endolytic peptidoglycan transglycosylase RlpA from Salmonella typhi.